The primary structure comprises 363 residues: tRNA-specific 2-thiouridylase MnmA (363 aa).

ATP-binding positions include 8 to 15 (AMSGGVDS) and leucine 34. The active-site Nucleophile is cysteine 103. A disulfide bridge links cysteine 103 with cysteine 195. Glycine 127 lines the ATP pocket. Residues 145–147 (KDQ) are interaction with tRNA. The active-site Cysteine persulfide intermediate is the cysteine 195.

Belongs to the MnmA/TRMU family.

The protein resides in the cytoplasm. The catalysed reaction is S-sulfanyl-L-cysteinyl-[protein] + uridine(34) in tRNA + AH2 + ATP = 2-thiouridine(34) in tRNA + L-cysteinyl-[protein] + A + AMP + diphosphate + H(+). Its function is as follows. Catalyzes the 2-thiolation of uridine at the wobble position (U34) of tRNA, leading to the formation of s(2)U34. This is tRNA-specific 2-thiouridylase MnmA from Thermobifida fusca (strain YX).